A 253-amino-acid chain; its full sequence is 5'-nucleotidase SurE (253 aa).

Residues Asp8, Asp9, Ser39, and Asn91 each coordinate a divalent metal cation.

This sequence belongs to the SurE nucleotidase family. The cofactor is a divalent metal cation.

It is found in the cytoplasm. The catalysed reaction is a ribonucleoside 5'-phosphate + H2O = a ribonucleoside + phosphate. Nucleotidase that shows phosphatase activity on nucleoside 5'-monophosphates. In Albidiferax ferrireducens (strain ATCC BAA-621 / DSM 15236 / T118) (Rhodoferax ferrireducens), this protein is 5'-nucleotidase SurE.